Reading from the N-terminus, the 428-residue chain is Forkhead box protein B2 (428 aa).

A DNA-binding region (fork-head) is located at residues 12–103; sequence QKPPYSYISL…GDMFENGSFL (92 aa). 2 disordered regions span residues 118-217 and 408-428; these read HLHS…MQEA and PTAAGRADSKGSSLHSVLVHS. A compositionally biased stretch (basic residues) spans 136-163; that stretch reads LHPHHPHHAHHHHHHHHHAAHHHHHHHP. 2 stretches are compositionally biased toward pro residues: residues 164 to 174 and 183 to 192; these read PQPPPPPPPHM and APAPQPPHLP. The segment covering 193-217 has biased composition (low complexity); sequence SQPAQQPQPQSQPPQTSHPGKMQEA.

The protein localises to the nucleus. In terms of biological role, transcription factor. The protein is Forkhead box protein B2 (Foxb2) of Mus musculus (Mouse).